Consider the following 134-residue polypeptide: MVKVINSSGKHKTATARATVMKGTGKVRINKIPLELYTPELAMMKISEPLLIAGKDVVSGLDINVDVRGGGIVGQANAVRTAVARGIVEWTNDTTIRDNFAAYDRNLLVSDSRQKEAKNFGGPGARSKYQKSYR.

The disordered stretch occupies residues 114-134 (QKEAKNFGGPGARSKYQKSYR).

This sequence belongs to the universal ribosomal protein uS9 family.

The protein is Small ribosomal subunit protein uS9 of Methanosarcina mazei (strain ATCC BAA-159 / DSM 3647 / Goe1 / Go1 / JCM 11833 / OCM 88) (Methanosarcina frisia).